The following is a 272-amino-acid chain: Ethanolamine ammonia-lyase small subunit (272 aa).

Val161, Glu182, and Cys211 together coordinate adenosylcob(III)alamin.

The protein belongs to the EutC family. The basic unit is a heterodimer which dimerizes to form tetramers. The heterotetramers trimerize; 6 large subunits form a core ring with 6 small subunits projecting outwards. It depends on adenosylcob(III)alamin as a cofactor.

The protein localises to the bacterial microcompartment. The catalysed reaction is ethanolamine = acetaldehyde + NH4(+). It participates in amine and polyamine degradation; ethanolamine degradation. Its function is as follows. Catalyzes the deamination of various vicinal amino-alcohols to oxo compounds. Allows this organism to utilize ethanolamine as the sole source of nitrogen and carbon in the presence of external vitamin B12. This Pseudomonas putida (strain W619) protein is Ethanolamine ammonia-lyase small subunit.